A 61-amino-acid chain; its full sequence is MAKKALVHKANKKPKFAVRAYTRCNKCGRPHSVYRKFGLCRICLREMAHAGELPGVQKSSW.

Residues C24, C27, C40, and C43 each coordinate Zn(2+).

It belongs to the universal ribosomal protein uS14 family. Zinc-binding uS14 subfamily. In terms of assembly, part of the 30S ribosomal subunit. Contacts proteins S3 and S10. Zn(2+) serves as cofactor.

In terms of biological role, binds 16S rRNA, required for the assembly of 30S particles and may also be responsible for determining the conformation of the 16S rRNA at the A site. This chain is Small ribosomal subunit protein uS14B, found in Mycolicibacterium smegmatis (strain ATCC 700084 / mc(2)155) (Mycobacterium smegmatis).